The primary structure comprises 572 residues: Methionine--tRNA ligase (572 aa).

The 'HIGH' region signature appears at 11–21 (PYINGIKHLGN). Residues Cys143, Cys146, Cys156, and Cys159 each coordinate Zn(2+). The 'KMSKS' region signature appears at 346–350 (QFSTS). An ATP-binding site is contributed by Thr349.

It belongs to the class-I aminoacyl-tRNA synthetase family. MetG type 1 subfamily. Monomer. Zn(2+) is required as a cofactor.

Its subcellular location is the cytoplasm. It catalyses the reaction tRNA(Met) + L-methionine + ATP = L-methionyl-tRNA(Met) + AMP + diphosphate. Is required not only for elongation of protein synthesis but also for the initiation of all mRNA translation through initiator tRNA(fMet) aminoacylation. This chain is Methionine--tRNA ligase, found in Cereibacter sphaeroides (strain ATCC 17029 / ATH 2.4.9) (Rhodobacter sphaeroides).